Here is a 461-residue protein sequence, read N- to C-terminus: Acetylcholine receptor subunit alpha (461 aa).

Residues Met1 to Gly24 form the signal peptide. The Extracellular portion of the chain corresponds to Ser25 to Ile234. Intrachain disulfides connect Cys152/Cys166 and Cys216/Cys217. Asn165 carries an N-linked (GlcNAc...) asparagine glycan. Transmembrane regions (helical) follow at residues Pro235–Leu259, Met267–Val285, and Tyr301–Ile320. Residues Asn321–His432 lie on the Cytoplasmic side of the membrane. Residues Ile433 to Ala451 form a helical membrane-spanning segment.

Belongs to the ligand-gated ion channel (TC 1.A.9) family. Acetylcholine receptor (TC 1.A.9.1) subfamily. Alpha-1/CHRNA1 sub-subfamily. Pentamer of two alpha chains, and one each of the beta, delta, and gamma chains.

It is found in the postsynaptic cell membrane. Its subcellular location is the cell membrane. The catalysed reaction is K(+)(in) = K(+)(out). It carries out the reaction Na(+)(in) = Na(+)(out). In terms of biological role, upon acetylcholine binding, the AChR responds by an extensive change in conformation that affects all subunits and leads to opening of an ion-conducting channel across the plasma membrane. In Torpedo marmorata (Marbled electric ray), this protein is Acetylcholine receptor subunit alpha (CHRNA1).